Here is a 113-residue protein sequence, read N- to C-terminus: Photosystem II reaction center Psb28 protein (113 aa).

This sequence belongs to the Psb28 family. Part of the photosystem II complex.

Its subcellular location is the cellular thylakoid membrane. In Prochlorococcus marinus (strain NATL1A), this protein is Photosystem II reaction center Psb28 protein.